We begin with the raw amino-acid sequence, 186 residues long: uncharacterized protein (186 aa).

The first 21 residues, 1–21 (MIHVKYIILGFIMVSSLNLYA), serve as a signal peptide directing secretion.

This is an uncharacterized protein from Rickettsia conorii (strain ATCC VR-613 / Malish 7).